A 475-amino-acid polypeptide reads, in one-letter code: Ribulose bisphosphate carboxylase large chain (475 aa).

Residues 1–2 (MS) constitute a propeptide that is removed on maturation. Residue P3 is modified to N-acetylproline. N6,N6,N6-trimethyllysine is present on K14. N123 and T173 together coordinate substrate. Catalysis depends on K175, which acts as the Proton acceptor. K177 is a substrate binding site. Mg(2+) is bound by residues K201, D203, and E204. K201 carries the post-translational modification N6-carboxylysine. The active-site Proton acceptor is the H294. 3 residues coordinate substrate: R295, H327, and S379.

It belongs to the RuBisCO large chain family. Type I subfamily. In terms of assembly, heterohexadecamer of 8 large chains and 8 small chains; disulfide-linked. The disulfide link is formed within the large subunit homodimers. It depends on Mg(2+) as a cofactor. Post-translationally, the disulfide bond which can form in the large chain dimeric partners within the hexadecamer appears to be associated with oxidative stress and protein turnover.

It localises to the plastid. It is found in the chloroplast. It carries out the reaction 2 (2R)-3-phosphoglycerate + 2 H(+) = D-ribulose 1,5-bisphosphate + CO2 + H2O. It catalyses the reaction D-ribulose 1,5-bisphosphate + O2 = 2-phosphoglycolate + (2R)-3-phosphoglycerate + 2 H(+). Its function is as follows. RuBisCO catalyzes two reactions: the carboxylation of D-ribulose 1,5-bisphosphate, the primary event in carbon dioxide fixation, as well as the oxidative fragmentation of the pentose substrate in the photorespiration process. Both reactions occur simultaneously and in competition at the same active site. The chain is Ribulose bisphosphate carboxylase large chain from Cryptomeria japonica (Japanese cedar).